A 41-amino-acid polypeptide reads, in one-letter code: Pi-stichotoxin-Hmg5c (41 aa).

Cystine bridges form between Cys-4–Cys-37, Cys-6–Cys-30, and Cys-20–Cys-38.

The protein belongs to the sea anemone type 3 (BDS) potassium channel toxin family.

The protein resides in the secreted. It is found in the nematocyst. In terms of biological role, toxin with different activities on acid-sensing ion channels (ASIC) and nicotinic acetylcholine receptors. Is able to bind T.californica muscle-type nicotinic acetylcholine receptors (nAChR) (alpha-1-beta-1-delta-epsilon (CHRNA1-CHRNB1-CHRND-CHRNE)), and human alpha-7/CHRNA7 nicotinic acetylcholine receptors. Weakly and reversibly inhibits rat homomeric ASIC1 (isoform ASIC1a) (IC(50)=1.25 uM), while it potentiates rat homomeric ASIC3 (EC(50)=1.53 uM). Rat ASIC1a current inhibition is not complete, and reaches a maximum of 86% inhibition. On rat ASIC3, does not activate the channel itself, but produces a remarkable potentiation of the transient current resulting from the acidic pulse. At the maximal applied concentration, elicits responses that are twice as high as those produced by extracellular protons. Surprisingly, shows a different activity on human ASIC3. On the truncated human ASIC3 (ASIC3-D20), the toxin weakly inhibits the channel. Molecular modeling interaction with rat ASIC1a suggests that it hinders the collapse of acidic pockets and stabilizes nonconducting channels state. In vivo, causes an anxiolytic effect on mouse behavior. Also shows an analgesic activity in an acid-induced muscle pain model, and important anti-inflammatory effect in models of acute local inflammation. In Heteractis magnifica (Magnificent sea anemone), this protein is Pi-stichotoxin-Hmg5c.